A 258-amino-acid chain; its full sequence is Ribonuclease HII (258 aa).

The RNase H type-2 domain occupies 71 to 258; sequence ELIAGIDEVG…PIKSMVNFKY (188 aa). Residues Asp77, Glu78, and Asp169 each contribute to the a divalent metal cation site.

This sequence belongs to the RNase HII family. Mn(2+) is required as a cofactor. The cofactor is Mg(2+).

The protein resides in the cytoplasm. The catalysed reaction is Endonucleolytic cleavage to 5'-phosphomonoester.. Functionally, endonuclease that specifically degrades the RNA of RNA-DNA hybrids. The chain is Ribonuclease HII from Lactococcus lactis subsp. cremoris (strain SK11).